The primary structure comprises 315 residues: MSHSLRIIFAGTPDFAARHLDALLSSEHQIVGVFTQPDRPAGRGKKLMPSPVKVLAEAHDVPVFQPSSLRPQENQQLVADLGADIMVVVAYGLILPKAVLEMPRLGCINVHGSLLPRWRGAAPIQRSLWAGDSETGVTIMQMDVGLDTGDMLYKLSCPITAEDTSGSLYDKLADLGPQGLLTTLAQLANGTAQPEVQDESLVSYAEKLSKEEARIDWSLSAAQLERCIRAFNPWPMSWLEIDGQPVKVWRASVIAEVTHAEPGTIVAATKQGIQVATGDGILSLESLQPAGKKAMSSQDLLNSRREWFIPGTRLA.

113–116 provides a ligand contact to (6S)-5,6,7,8-tetrahydrofolate; that stretch reads SLLP.

Belongs to the Fmt family.

The enzyme catalyses L-methionyl-tRNA(fMet) + (6R)-10-formyltetrahydrofolate = N-formyl-L-methionyl-tRNA(fMet) + (6S)-5,6,7,8-tetrahydrofolate + H(+). Attaches a formyl group to the free amino group of methionyl-tRNA(fMet). The formyl group appears to play a dual role in the initiator identity of N-formylmethionyl-tRNA by promoting its recognition by IF2 and preventing the misappropriation of this tRNA by the elongation apparatus. This Klebsiella pneumoniae (strain 342) protein is Methionyl-tRNA formyltransferase.